We begin with the raw amino-acid sequence, 783 residues long: MDAIKCSSSFLHHTKLNTLFSNHTFPKISAPNFKPLFRPISISAKDRRSNEAENIAVVEKPLKSDRFFISDGLPSPFGPTVRDDGVNFSVYSTNSVSATICLISLSDLRQNKVTEEIQLDPSRNRTGHVWHVFLRGDFKDMLYGYRFDGKFSPEEGHYYDSSNILLDPYAKAIISRDEFGVLGPDDNCWPQMACMVPTREEEFDWEGDMHLKLPQKDLVIYEMHVRGFTRHESSKIEFPGTYQGVAEKLDHLKELGINCIELMPCHEFNELEYYSYNTILGDHRVNFWGYSTIGFFSPMIRYASASSNNFAGRAINEFKILVKEAHKRGIEVIMDVVLNHTAEGNEKGPIFSFRGVDNSVYYMLAPKGEFYNYSGCGNTFNCNHPVVRQFILDCLRYWVTEMHVDGFRFDLGSIMSRSSSLWDAANVYGADVEGDLLTTGTPISCPPVIDMISNDPILRGVKLIAEAWDAGGLYQVGMFPHWGIWSEWNGKFRDVVRQFIKGTDGFSGAFAECLCGSPNLYQGGRKPWHSINFICAHDGFTLADLVTYNNKNNLANGEENNDGENHNYSWNCGEEGDFASISVKRLRKRQMRNFFVSLMVSQGVPMIYMGDEYGHTKGGNNNTYCHDNYMNYFRWDKKEEAHSDFFRFCRILIKFRDECESLGLNDFPTAKRLQWHGLAPEIPNWSETSRFVAFSLVDSVKKEIYVAFNTSHLATLVSLPNRPGYRWEPFVDTSKPSPYDCITPDLPERETAMKQYRHFLDANVYPMLSYSSIILLLSPIKDP.

The N-terminal 43 residues, 1–43, are a transit peptide targeting the chloroplast; that stretch reads MDAIKCSSSFLHHTKLNTLFSNHTFPKISAPNFKPLFRPISIS. Aspartate 410 acts as the Nucleophile in catalysis. The Proton donor role is filled by glutamate 466.

It belongs to the glycosyl hydrolase 13 family. In terms of assembly, associates with ISA2 to form the heteromultimeric complex Iso1 required for amylopectin synthesis.

The protein localises to the plastid. It localises to the chloroplast. It catalyses the reaction Hydrolysis of (1-&gt;6)-alpha-D-glucosidic branch linkages in glycogen, amylopectin and their beta-limit dextrins.. It functions in the pathway glycan biosynthesis; starch biosynthesis. Functionally, involved in the trimming of pre-amylopectin chains. Accelerates the crystallization of nascent amylopectin molecules during starch synthesis. ISA1 and ISA2 work exclusively together as a multimeric holoenzyme. ISA1-ISA2 removes preferentially branches that are very close to other branches. Promotes negative gravitropic responses in shoots by facilitating starch granules (statoliths) formation in hypocotyls. The polypeptide is Isoamylase 1, chloroplastic (Arabidopsis thaliana (Mouse-ear cress)).